A 317-amino-acid polypeptide reads, in one-letter code: Acetyl-coenzyme A carboxylase carboxyl transferase subunit beta (317 aa).

The disordered stretch occupies residues 1 to 28 (MANNMTDTMTKFDTNNDSASLQQNGNKA). The CoA carboxyltransferase N-terminal domain occupies 55-317 (PSTKCSSCHS…LCSVPNVDAQ (263 aa)). Residues C59, C62, C78, and C81 each contribute to the Zn(2+) site. The C4-type zinc-finger motif lies at 59–81 (CSSCHSVITNTALIFNCYVCPHC).

This sequence belongs to the AccD/PCCB family. In terms of assembly, acetyl-CoA carboxylase is a heterohexamer composed of biotin carboxyl carrier protein (AccB), biotin carboxylase (AccC) and two subunits each of ACCase subunit alpha (AccA) and ACCase subunit beta (AccD). Requires Zn(2+) as cofactor.

It is found in the cytoplasm. The catalysed reaction is N(6)-carboxybiotinyl-L-lysyl-[protein] + acetyl-CoA = N(6)-biotinyl-L-lysyl-[protein] + malonyl-CoA. It functions in the pathway lipid metabolism; malonyl-CoA biosynthesis; malonyl-CoA from acetyl-CoA: step 1/1. Component of the acetyl coenzyme A carboxylase (ACC) complex. Biotin carboxylase (BC) catalyzes the carboxylation of biotin on its carrier protein (BCCP) and then the CO(2) group is transferred by the transcarboxylase to acetyl-CoA to form malonyl-CoA. The protein is Acetyl-coenzyme A carboxylase carboxyl transferase subunit beta of Psychrobacter arcticus (strain DSM 17307 / VKM B-2377 / 273-4).